A 590-amino-acid polypeptide reads, in one-letter code: Cell division protein FtsZ 1 (590 aa).

GTP-binding positions include glycine 24 to asparagine 28, glycine 111 to glycine 113, glutamate 142, arginine 146, and aspartate 190. Disordered regions lie at residues alanine 346 to glutamine 372 and glutamate 524 to serine 590. Low complexity predominate over residues alanine 534–proline 546. The span at glycine 559 to aspartate 576 shows a compositional bias: basic and acidic residues.

This sequence belongs to the FtsZ family. Homodimer. Polymerizes to form a dynamic ring structure in a strictly GTP-dependent manner. Interacts directly with several other division proteins.

The protein resides in the cytoplasm. Its function is as follows. Essential cell division protein that forms a contractile ring structure (Z ring) at the future cell division site. The regulation of the ring assembly controls the timing and the location of cell division. One of the functions of the FtsZ ring is to recruit other cell division proteins to the septum to produce a new cell wall between the dividing cells. Binds GTP and shows GTPase activity. In Rhizobium meliloti (strain 1021) (Ensifer meliloti), this protein is Cell division protein FtsZ 1.